The following is an 80-amino-acid chain: Metallothionein-like protein type 2 MET1 (80 aa).

Belongs to the metallothionein superfamily. Type 15 family.

In terms of biological role, metallothioneins have a high content of cysteine residues that bind various heavy metals. This is Metallothionein-like protein type 2 MET1 (MET1) from Fragaria ananassa (Strawberry).